Here is a 296-residue protein sequence, read N- to C-terminus: Cytidine deaminase (296 aa).

CMP/dCMP-type deaminase domains are found at residues 52-172 (TAVE…FGPK) and 191-296 (THAD…YFAL). Position 93-95 (93-95 (NQE)) interacts with substrate. Histidine 106 provides a ligand contact to Zn(2+). Glutamate 108 functions as the Proton donor in the catalytic mechanism. Zn(2+) is bound by residues cysteine 133 and cysteine 136.

It belongs to the cytidine and deoxycytidylate deaminase family. In terms of assembly, homodimer. Requires Zn(2+) as cofactor.

It catalyses the reaction cytidine + H2O + H(+) = uridine + NH4(+). The catalysed reaction is 2'-deoxycytidine + H2O + H(+) = 2'-deoxyuridine + NH4(+). Its function is as follows. This enzyme scavenges exogenous and endogenous cytidine and 2'-deoxycytidine for UMP synthesis. This is Cytidine deaminase from Actinobacillus succinogenes (strain ATCC 55618 / DSM 22257 / CCUG 43843 / 130Z).